Consider the following 149-residue polypeptide: Ribosome-binding factor A (149 aa).

It belongs to the RbfA family. Monomer. Binds 30S ribosomal subunits, but not 50S ribosomal subunits or 70S ribosomes.

The protein localises to the cytoplasm. In terms of biological role, one of several proteins that assist in the late maturation steps of the functional core of the 30S ribosomal subunit. Associates with free 30S ribosomal subunits (but not with 30S subunits that are part of 70S ribosomes or polysomes). Required for efficient processing of 16S rRNA. May interact with the 5'-terminal helix region of 16S rRNA. In Caulobacter vibrioides (strain ATCC 19089 / CIP 103742 / CB 15) (Caulobacter crescentus), this protein is Ribosome-binding factor A.